The primary structure comprises 193 residues: Adenine phosphoribosyltransferase (193 aa).

This sequence belongs to the purine/pyrimidine phosphoribosyltransferase family. In terms of assembly, homodimer.

Its subcellular location is the cytoplasm. The enzyme catalyses AMP + diphosphate = 5-phospho-alpha-D-ribose 1-diphosphate + adenine. Its pathway is purine metabolism; AMP biosynthesis via salvage pathway; AMP from adenine: step 1/1. Functionally, catalyzes a salvage reaction resulting in the formation of AMP, that is energically less costly than de novo synthesis. This chain is Adenine phosphoribosyltransferase, found in Chromobacterium violaceum (strain ATCC 12472 / DSM 30191 / JCM 1249 / CCUG 213 / NBRC 12614 / NCIMB 9131 / NCTC 9757 / MK).